Consider the following 152-residue polypeptide: ESAT-6 secretion machinery protein EssA (152 aa).

Over 1–114 (MLMNSVIALT…PYIQNKQEKK (114 aa)) the chain is Cytoplasmic. Residues 115–135 (IFPYILMSVGAFLTLGFVIFS) traverse the membrane as a helical segment. Topologically, residues 136-152 (IHKGRRTKNESARKSNI) are extracellular.

The protein belongs to the EssA family.

Its subcellular location is the cell membrane. Its function is as follows. Component of the ESAT-6 secretion system (Ess). Required for the secretion of EsxA. In Staphylococcus aureus (strain MRSA252), this protein is ESAT-6 secretion machinery protein EssA.